The primary structure comprises 295 residues: MATAALFETSITSLPLLHRGKVRDIYAVDENHLLIIQTDRVSAFDVILPTPIPEKGKILTKISRFWFDKLAHIIPNHLTDITPESVVSSREQDQVSDRAFIVRKLKPLPVEAIVRGYISGSGWKDYQRSGTICGIALPAGLREADKIPDGAIFTPSTKAEAGSHDENISYSVCEQLLGVSLAAAVSRHSIALYTAAADYALTRSIIIADTKFEFGLDEANQLYLIDEALTPDSSRFWPAESYRPGKTPPSYDKQFIRDWLEQINWNKTPPAPPIPEEVLVQTIEKYQAACRVLTQ.

Belongs to the SAICAR synthetase family.

It catalyses the reaction 5-amino-1-(5-phospho-D-ribosyl)imidazole-4-carboxylate + L-aspartate + ATP = (2S)-2-[5-amino-1-(5-phospho-beta-D-ribosyl)imidazole-4-carboxamido]succinate + ADP + phosphate + 2 H(+). The protein operates within purine metabolism; IMP biosynthesis via de novo pathway; 5-amino-1-(5-phospho-D-ribosyl)imidazole-4-carboxamide from 5-amino-1-(5-phospho-D-ribosyl)imidazole-4-carboxylate: step 1/2. In Nitrosomonas europaea (strain ATCC 19718 / CIP 103999 / KCTC 2705 / NBRC 14298), this protein is Phosphoribosylaminoimidazole-succinocarboxamide synthase.